The following is a 130-amino-acid chain: S-adenosylmethionine decarboxylase proenzyme (130 aa).

Serine 63 acts as the Schiff-base intermediate with substrate; via pyruvic acid in catalysis. Serine 63 carries the pyruvic acid (Ser); by autocatalysis modification. Residue histidine 68 is the Proton acceptor; for processing activity of the active site. Cysteine 83 functions as the Proton donor; for catalytic activity in the catalytic mechanism.

This sequence belongs to the prokaryotic AdoMetDC family. Type 1 subfamily. As to quaternary structure, heterotetramer of two alpha and two beta chains arranged as a dimer of alpha/beta heterodimers. The cofactor is pyruvate. Is synthesized initially as an inactive proenzyme. Formation of the active enzyme involves a self-maturation process in which the active site pyruvoyl group is generated from an internal serine residue via an autocatalytic post-translational modification. Two non-identical subunits are generated from the proenzyme in this reaction, and the pyruvate is formed at the N-terminus of the alpha chain, which is derived from the carboxyl end of the proenzyme. The post-translation cleavage follows an unusual pathway, termed non-hydrolytic serinolysis, in which the side chain hydroxyl group of the serine supplies its oxygen atom to form the C-terminus of the beta chain, while the remainder of the serine residue undergoes an oxidative deamination to produce ammonia and the pyruvoyl group blocking the N-terminus of the alpha chain.

It carries out the reaction S-adenosyl-L-methionine + H(+) = S-adenosyl 3-(methylsulfanyl)propylamine + CO2. The protein operates within amine and polyamine biosynthesis; S-adenosylmethioninamine biosynthesis; S-adenosylmethioninamine from S-adenosyl-L-methionine: step 1/1. Catalyzes the decarboxylation of S-adenosylmethionine to S-adenosylmethioninamine (dcAdoMet), the propylamine donor required for the synthesis of the polyamines spermine and spermidine from the diamine putrescine. This Thermotoga maritima (strain ATCC 43589 / DSM 3109 / JCM 10099 / NBRC 100826 / MSB8) protein is S-adenosylmethionine decarboxylase proenzyme (speH).